A 257-amino-acid chain; its full sequence is uncharacterized protein (257 aa).

A helical transmembrane segment spans residues I6–F26.

This sequence belongs to the staphylococcal tandem lipoprotein family.

It localises to the cell membrane. This is an uncharacterized protein from Staphylococcus aureus (strain MSSA476).